Reading from the N-terminus, the 1112-residue chain is Glutamate receptor-interacting protein 1 (1112 aa).

Ser-43 is subject to Phosphoserine. PDZ domains follow at residues 53–136 (VVEL…EYEL), 150–238 (TVEV…EYDV), 252–336 (LVEV…LPHH), 471–560 (EVVL…EFDV), 572–657 (HVKL…RKDE), and 672–754 (TVEL…KKQT). Disordered regions lie at residues 752-796 (KQTD…VYPS), 841-886 (KRAS…AEQE), and 922-963 (NHEA…DVGR). Over residues 869-880 (STASGFAGASDS) the composition is skewed to low complexity. The span at 928 to 958 (ARSQLGRQASFQERSNSRPHYSQTTRSNTLP) shows a compositional bias: polar residues. Residues 988–1070 (KVTLYKDSGM…KLDLVISRNP (83 aa)) enclose the PDZ 7 domain. The disordered stretch occupies residues 1077–1112 (IEQPALPSDWSEQNSAFFQQPSHGGNLETREPTNTL). Polar residues predominate over residues 1086-1099 (WSEQNSAFFQQPSH).

Interacts with EFNB1, EPHA7, EPHB2, EFNB3, KIF5A, KIF5C, KIF5B and the C-terminal tail of PRLHR. Forms a ternary complex with GRIA2 and CSPG4. Can form homomultimers or heteromultimers with GRIP2. Interacts with GRIA2, GRIA3, GRIPAP1/GRASP1, PPFIA1, PPFIA4, FRAS1, PLCD4, PTPRF and liprins-alpha. Interacts with ATAD1 in an ATP-dependent manner. ATAD1-catalyzed ATP hydrolysis disrupts binding to ATAD1 and to GRIA2 and leads to AMPAR complex disassembly. Interacts with SLC30A9. Interacts with BUD23. Forms a complex with NSG1, GRIA2 and STX12; controls the intracellular fate of AMPAR and the endosomal sorting of the GRIA2 subunit toward recycling and membrane targeting. Interacts with NSG1. As to expression, expressed in brain, testis and retina. In brain highly expressed in the olfactory bulb, cortex and hippocampus and lower level in thalamus, cerebellum and spinal cord. In brain it is found in the perikaryon, dendrites, dendritic shafts, dendritic spines and, excitatory and inhibitory synapses of neurons. In retina, it is most abundant in the plexiform layers than in perikarya.

It localises to the cytoplasmic vesicle. The protein resides in the perikaryon. It is found in the cell projection. The protein localises to the dendrite. Its subcellular location is the cytoplasm. It localises to the endomembrane system. The protein resides in the postsynaptic cell membrane. It is found in the postsynaptic density. The protein localises to the endoplasmic reticulum membrane. Its function is as follows. May play a role as a localized scaffold for the assembly of a multiprotein signaling complex and as mediator of the trafficking of its binding partners at specific subcellular location in neurons. Through complex formation with NSG1, GRIA2 and STX12 controls the intracellular fate of AMPAR and the endosomal sorting of the GRIA2 subunit toward recycling and membrane targeting. The protein is Glutamate receptor-interacting protein 1 (Grip1) of Rattus norvegicus (Rat).